The primary structure comprises 322 residues: Solute carrier family 35 member B1 (322 aa).

8 consecutive transmembrane segments (helical) span residues 12 to 32 (LRLP…GILQ), 51 to 71 (FALT…KILI), 85 to 105 (WLYA…NSAL), 136 to 156 (YPMA…LFMY), 168 to 188 (TIGY…LTGV), 210 to 230 (LWST…WEFL), 243 to 263 (ILLF…TVVY), and 285 to 305 (VILF…LVFL). The Di-lysine motif motif lies at 318 to 322 (KKTSH).

This sequence belongs to the nucleotide-sugar transporter family. SLC35B subfamily.

Its subcellular location is the endoplasmic reticulum membrane. The enzyme catalyses ADP(in) + ATP(out) = ADP(out) + ATP(in). It carries out the reaction UDP(out) + ATP(in) = UDP(in) + ATP(out). The catalysed reaction is UTP(out) + ATP(in) = UTP(in) + ATP(out). It catalyses the reaction dATP(out) + ATP(in) = dATP(in) + ATP(out). Its function is as follows. ATP:ADP antiporter that catalyzes the exchange of ATP and ADP across the endoplasmic reticulum (ER) membrane. Imports ATP from the cytosol to the ER lumen and exports ADP in the opposite direction. Regulates ER energy metabolism and protein biogenesis. Appears to be part of a calcium-dependent ER to cytosol low energy response axis, where calcium efflux from ER to the cytosol triggers ATP import into the ER lumen to maintain sufficient ATP supply. Provides ATP to ER chaperone HSPA5 that drives protein folding and trafficking in the ER. Can transport dATP, UTP or UDP in exchange for ATP, but the physiological relevance of this process remains to be established. In Bos taurus (Bovine), this protein is Solute carrier family 35 member B1 (SLC35B1).